Here is a 560-residue protein sequence, read N- to C-terminus: Serine palmitoyltransferase 2 (560 aa).

A helical transmembrane segment spans residues 65–85 (PMLVAVLTYVGYGVLTLFGYL). Position 377 is an N6-(pyridoxal phosphate)lysine (K377).

It belongs to the class-II pyridoxal-phosphate-dependent aminotransferase family. In terms of assembly, component of the serine palmitoyltransferase (SPT) complex, which is composed of SPTLC1, SPTLC2 or SPTLC3 and SPTSSA or SPTSSB. The heterodimer consisting of SPTLC1 and SPTLC2/SPTLC3 forms the catalytic core of the enzyme, while SPTSSA or SPTSSB subunits determine substrate specificity. SPT also interacts with ORMDL proteins, especially ORMDL3, which negatively regulate SPT activity in the presence of ceramides. Forms dimers of heterodimers with SPTLC1. Pyridoxal 5'-phosphate serves as cofactor. Expressed in a variety of tissues. Expressed in brains cortices (at protein level). Expressed in brown and white adipose tissues. Expressed in liver.

The protein localises to the endoplasmic reticulum membrane. The catalysed reaction is L-serine + hexadecanoyl-CoA + H(+) = 3-oxosphinganine + CO2 + CoA. It carries out the reaction octadecanoyl-CoA + L-serine + H(+) = 3-oxoeicosasphinganine + CO2 + CoA. It functions in the pathway lipid metabolism; sphingolipid metabolism. Its activity is regulated as follows. SPT complex catalytic activity is negatively regulated by ORMDL proteins, including ORMDL3, in the presence of ceramides. This mechanism allows to maintain ceramide levels at sufficient concentrations for the production of complex sphingolipids, but which prevents the accumulation of ceramides to levels that trigger apoptosis. Functionally, component of the serine palmitoyltransferase multisubunit enzyme (SPT) that catalyzes the initial and rate-limiting step in sphingolipid biosynthesis by condensing L-serine and activated acyl-CoA (most commonly palmitoyl-CoA) to form long-chain bases. The SPT complex is composed of SPTLC1, SPTLC2 or SPTLC3 and SPTSSA or SPTSSB. Within this complex, the heterodimer consisting of SPTLC1 and SPTLC2/SPTLC3 forms the catalytic core. The composition of the serine palmitoyltransferase (SPT) complex determines the substrate preference. The SPTLC1-SPTLC2-SPTSSA complex shows a strong preference for C16-CoA substrate, while the SPTLC1-SPTLC3-SPTSSA isozyme uses both C14-CoA and C16-CoA as substrates, with a slight preference for C14-CoA. The SPTLC1-SPTLC2-SPTSSB complex shows a strong preference for C18-CoA substrate, while the SPTLC1-SPTLC3-SPTSSB isozyme displays an ability to use a broader range of acyl-CoAs, without apparent preference. Crucial for adipogenesis. The chain is Serine palmitoyltransferase 2 from Mus musculus (Mouse).